The primary structure comprises 448 residues: Exodeoxyribonuclease 7 large subunit (448 aa).

It belongs to the XseA family. Heterooligomer composed of large and small subunits.

The protein localises to the cytoplasm. The enzyme catalyses Exonucleolytic cleavage in either 5'- to 3'- or 3'- to 5'-direction to yield nucleoside 5'-phosphates.. Bidirectionally degrades single-stranded DNA into large acid-insoluble oligonucleotides, which are then degraded further into small acid-soluble oligonucleotides. This Shewanella baltica (strain OS155 / ATCC BAA-1091) protein is Exodeoxyribonuclease 7 large subunit.